The primary structure comprises 338 residues: Aspartate-semialdehyde dehydrogenase (338 aa).

NADP(+) contacts are provided by residues 13 to 16 (TGNV) and 41 to 42 (NS). R101 contacts phosphate. Residue C132 is the Acyl-thioester intermediate of the active site. Substrate is bound at residue Q159. Residues 162 to 163 (SG) and P187 contribute to the NADP(+) site. K216 lines the phosphate pocket. R237 provides a ligand contact to substrate. The active-site Proton acceptor is H244. N317 is a binding site for NADP(+).

It belongs to the aspartate-semialdehyde dehydrogenase family. In terms of assembly, homodimer.

The catalysed reaction is L-aspartate 4-semialdehyde + phosphate + NADP(+) = 4-phospho-L-aspartate + NADPH + H(+). It participates in amino-acid biosynthesis; L-lysine biosynthesis via DAP pathway; (S)-tetrahydrodipicolinate from L-aspartate: step 2/4. It functions in the pathway amino-acid biosynthesis; L-methionine biosynthesis via de novo pathway; L-homoserine from L-aspartate: step 2/3. Its pathway is amino-acid biosynthesis; L-threonine biosynthesis; L-threonine from L-aspartate: step 2/5. Its function is as follows. Catalyzes the NADPH-dependent formation of L-aspartate-semialdehyde (L-ASA) by the reductive dephosphorylation of L-aspartyl-4-phosphate. The chain is Aspartate-semialdehyde dehydrogenase from Rickettsia typhi (strain ATCC VR-144 / Wilmington).